The primary structure comprises 221 residues: Urease accessory protein UreF (221 aa).

This sequence belongs to the UreF family. In terms of assembly, ureD, UreF and UreG form a complex that acts as a GTP-hydrolysis-dependent molecular chaperone, activating the urease apoprotein by helping to assemble the nickel containing metallocenter of UreC. The UreE protein probably delivers the nickel.

It is found in the cytoplasm. Functionally, required for maturation of urease via the functional incorporation of the urease nickel metallocenter. The protein is Urease accessory protein UreF of Microcystis aeruginosa (strain NIES-843 / IAM M-2473).